Consider the following 59-residue polypeptide: UPF0434 protein lpg1920 (59 aa).

Belongs to the UPF0434 family.

This is UPF0434 protein lpg1920 from Legionella pneumophila subsp. pneumophila (strain Philadelphia 1 / ATCC 33152 / DSM 7513).